Consider the following 630-residue polypeptide: Chaperone protein HtpG (630 aa).

Residues 1 to 327 (MSVETYKFDA…SEDLSLNISR (327 aa)) form an a; substrate-binding region. A b region spans residues 328–551 (ETLQHSPLID…EGSMDIRTER (224 aa)). Residues 483 to 499 (TKTAKSSDTNNDGKDDT) show a composition bias toward basic and acidic residues. The interval 483–504 (TKTAKSSDTNNDGKDDTSSSDD) is disordered. Residues 552 to 630 (FLIEQKQLSS…INFFIEKSVN (79 aa)) are c.

The protein belongs to the heat shock protein 90 family. Homodimer.

It is found in the cytoplasm. Functionally, molecular chaperone. Has ATPase activity. The polypeptide is Chaperone protein HtpG (Orientia tsutsugamushi (strain Boryong) (Rickettsia tsutsugamushi)).